A 106-amino-acid chain; its full sequence is Cell cycle protein GpsB (106 aa).

Positions 34–67 (LDVIIQDYDNFKQEIDRLKAENEKLKKSTPAVEQ) form a coiled coil. A disordered region spans residues 55-83 (NEKLKKSTPAVEQSRSRSQQPPTSQVNYD). The segment covering 70–79 (SRSQQPPTSQ) has biased composition (low complexity).

This sequence belongs to the GpsB family. As to quaternary structure, forms polymers through the coiled coil domains. Interacts with PBP1, MreC and EzrA.

The protein resides in the cytoplasm. Functionally, divisome component that associates with the complex late in its assembly, after the Z-ring is formed, and is dependent on DivIC and PBP2B for its recruitment to the divisome. Together with EzrA, is a key component of the system that regulates PBP1 localization during cell cycle progression. Its main role could be the removal of PBP1 from the cell pole after pole maturation is completed. Also contributes to the recruitment of PBP1 to the division complex. Not essential for septum formation. The polypeptide is Cell cycle protein GpsB (Oceanobacillus iheyensis (strain DSM 14371 / CIP 107618 / JCM 11309 / KCTC 3954 / HTE831)).